Consider the following 235-residue polypeptide: 2,3,4,5-tetrahydropyridine-2,6-dicarboxylate N-acetyltransferase (235 aa).

This sequence belongs to the transferase hexapeptide repeat family. DapH subfamily.

It catalyses the reaction (S)-2,3,4,5-tetrahydrodipicolinate + acetyl-CoA + H2O = L-2-acetamido-6-oxoheptanedioate + CoA. It participates in amino-acid biosynthesis; L-lysine biosynthesis via DAP pathway; LL-2,6-diaminopimelate from (S)-tetrahydrodipicolinate (acetylase route): step 1/3. Its function is as follows. Catalyzes the transfer of an acetyl group from acetyl-CoA to tetrahydrodipicolinate. The chain is 2,3,4,5-tetrahydropyridine-2,6-dicarboxylate N-acetyltransferase from Exiguobacterium sibiricum (strain DSM 17290 / CCUG 55495 / CIP 109462 / JCM 13490 / 255-15).